A 273-amino-acid polypeptide reads, in one-letter code: MALKNFNPITPSLRELVQVDKTSLWKGRPLKSLTKGISKTGGRNNQGRITSWHRGGGHKKLYRIIDFKRNKIDVSAIVERIEYDPNRTAFIALIKYEDGEYSYILAPQKLSVGDRVISSQDADIKIGNCLPLKCIPIGTTLHNVEMKVGKGGQIARSAGTSVDLVGKDSGYAQIKLRSGEFRLVPLDCKATIGSISNPDQKNINLGKAGRNRWLGWRPHVRGVAMNPVDHPHGGGEGKTSGGRHPVTPWGFPTKGKKTRKNKRTSKFIVKKRK.

The segment at 228–273 is disordered; sequence VDHPHGGGEGKTSGGRHPVTPWGFPTKGKKTRKNKRTSKFIVKKRK. Residues 254–273 are compositionally biased toward basic residues; that stretch reads KGKKTRKNKRTSKFIVKKRK.

It belongs to the universal ribosomal protein uL2 family. In terms of assembly, part of the 50S ribosomal subunit. Forms a bridge to the 30S subunit in the 70S ribosome.

Functionally, one of the primary rRNA binding proteins. Required for association of the 30S and 50S subunits to form the 70S ribosome, for tRNA binding and peptide bond formation. It has been suggested to have peptidyltransferase activity; this is somewhat controversial. Makes several contacts with the 16S rRNA in the 70S ribosome. The chain is Large ribosomal subunit protein uL2 from Rickettsia rickettsii (strain Iowa).